The chain runs to 661 residues: Immunoglobulin-like domain-containing receptor 2 (661 aa).

Positions 1–35 are cleaved as a signal peptide; that stretch reads MPAFPTLDLDGKLGKMDRVVLGWTAVFWLTAMVEG. The 142-residue stretch at 36-177 folds into the Ig-like V-type domain; that stretch reads LQVTVPDKKK…LEGKNEDSVE (142 aa). Residues 36–201 lie on the Lumenal side of the membrane; it reads LQVTVPDKKK…PSFAVEIMPE (166 aa). C57 and C160 are disulfide-bonded. The helical transmembrane segment at 202 to 222 threads the bilayer; that stretch reads WVFVGLVILGIFLFFVLVGIC. The Cytoplasmic portion of the chain corresponds to 223–661; sequence WCQCCPHSCC…DFPTRMSLVV (439 aa). Disordered stretches follow at residues 288–310, 410–429, and 453–661; these read LMDK…HSVR, EDRE…MLSR, and QRSR…SLVV. Basic and acidic residues-rich tracts occupy residues 410 to 428 and 463 to 478; these read EDRE…EMLS and HEAR…ESRA. Position 487 is a phosphoserine (S487). Over residues 491–506 the composition is skewed to basic and acidic residues; it reads YYGRGRSREPPGDGER. Position 559 is an omega-N-methylarginine (R559). S594 carries the post-translational modification Phosphoserine. Residues 595–607 are compositionally biased toward acidic residues; the sequence is EGEDEDDAADEDA. The span at 628–639 shows a compositional bias: basic and acidic residues; the sequence is RGRDLSFHSNSE.

This sequence belongs to the immunoglobulin superfamily. LISCH7 family. In terms of assembly, interacts with MARVELD2 and OCLN. Interacts with P4HB and HSPA5; the interaction with HSPA5 stabilizes ILDR2 expression. Interacts (via C-terminus) with TRA2A, TRA2B and SRSF1. Expressed in epithelial tissues, mainly in liver, kidney and colon.

It is found in the endoplasmic reticulum membrane. The protein resides in the cell junction. It localises to the tight junction. The protein localises to the nucleus. Its function is as follows. May be involved in ER stress pathways with effects on lipid homeostasis and insulin secretion. With ILDR1 and LSR, involved in the maintain of the epithelial barrier function through the recruitment of MARVELD2/tricellulin to tricellular tight junctions. Also functions as a B7-like protein family member expressed on immune cells and inflamed tissue and with T-cell inhibitory activity. In the inner ear, may regulate alternative pre-mRNA splicing via binding to TRA2A, TRA2B and SRSF1. The protein is Immunoglobulin-like domain-containing receptor 2 of Mus musculus (Mouse).